The chain runs to 184 residues: CASP-like protein 1U2 (184 aa).

At 1 to 16 (MSYGCQVSDDEPNGSK) the chain is on the cytoplasmic side. A helical membrane pass occupies residues 17–37 (AVSLLLRLSTLALALTSAVVM). Topologically, residues 38–62 (ATASECTVVQLNGVVATITYKDFPP) are extracellular. A helical membrane pass occupies residues 63-83 (FVYLVGFNIAAAMLEAAAIYL). The Cytoplasmic segment spans residues 84–100 (RLSTGGGDDDDEGFKGK). Residues 101–121 (LPGILLVVIDVAVQALVYTAT) traverse the membrane as a helical segment. The Extracellular segment spans residues 122–153 (GGAFAAVSAYGPQINACGAGAGRFCGQVHQSK). The chain crosses the membrane as a helical span at residues 154–174 (LLSFAGSAAVGLAVVFRDVSL). The Cytoplasmic segment spans residues 175-184 (PFSLWPTSSD).

The protein belongs to the Casparian strip membrane proteins (CASP) family. In terms of assembly, homodimer and heterodimers.

The protein resides in the cell membrane. In Oryza sativa subsp. japonica (Rice), this protein is CASP-like protein 1U2.